A 368-amino-acid polypeptide reads, in one-letter code: Alanine racemase 3 (368 aa).

The active-site Proton acceptor; specific for D-alanine is Lys-42. Lys-42 is subject to N6-(pyridoxal phosphate)lysine. Arg-141 serves as a coordination point for substrate. The Proton acceptor; specific for L-alanine role is filled by Tyr-262. Substrate is bound at residue Met-310.

This sequence belongs to the alanine racemase family. Requires pyridoxal 5'-phosphate as cofactor.

The enzyme catalyses L-alanine = D-alanine. It participates in amino-acid biosynthesis; D-alanine biosynthesis; D-alanine from L-alanine: step 1/1. Catalyzes the interconversion of L-alanine and D-alanine. May also act on other amino acids. The protein is Alanine racemase 3 (alr3) of Salmonella typhi.